The primary structure comprises 387 residues: Sorting nexin-7 (387 aa).

In terms of domain architecture, PX spans 30–151 (KDLFITVDEP…IFLTAQAWEL (122 aa)). Arginine 73, glutamine 75, lysine 103, and arginine 117 together coordinate a 1,2-diacyl-sn-glycero-3-phospho-(1D-myo-inositol-3-phosphate). The BAR domain occupies 178 to 387 (GVKNRPEEFM…HLEEASEDKP (210 aa)).

This sequence belongs to the sorting nexin family. Heterodimer; heterodimerizes with SNX4.

It localises to the early endosome membrane. Its function is as follows. Involved in the regulation of endocytosis and in several stages of intracellular trafficking. Together with SNX4, involved in autophagosome assembly by regulating trafficking and recycling of phospholipid scramblase ATG9A. The chain is Sorting nexin-7 from Homo sapiens (Human).